Reading from the N-terminus, the 217-residue chain is Thiamine-phosphate synthase (217 aa).

4-amino-2-methyl-5-(diphosphooxymethyl)pyrimidine contacts are provided by residues 39 to 43 and Asn71; that span reads QYRDK. Residues Asp72 and Asp91 each contribute to the Mg(2+) site. Thr110 provides a ligand contact to 4-amino-2-methyl-5-(diphosphooxymethyl)pyrimidine. 137 to 139 contacts 2-[(2R,5Z)-2-carboxy-4-methylthiazol-5(2H)-ylidene]ethyl phosphate; it reads SNT. Lys140 is a 4-amino-2-methyl-5-(diphosphooxymethyl)pyrimidine binding site. Gly167 is a binding site for 2-[(2R,5Z)-2-carboxy-4-methylthiazol-5(2H)-ylidene]ethyl phosphate.

It belongs to the thiamine-phosphate synthase family. The cofactor is Mg(2+).

The catalysed reaction is 2-[(2R,5Z)-2-carboxy-4-methylthiazol-5(2H)-ylidene]ethyl phosphate + 4-amino-2-methyl-5-(diphosphooxymethyl)pyrimidine + 2 H(+) = thiamine phosphate + CO2 + diphosphate. The enzyme catalyses 2-(2-carboxy-4-methylthiazol-5-yl)ethyl phosphate + 4-amino-2-methyl-5-(diphosphooxymethyl)pyrimidine + 2 H(+) = thiamine phosphate + CO2 + diphosphate. It carries out the reaction 4-methyl-5-(2-phosphooxyethyl)-thiazole + 4-amino-2-methyl-5-(diphosphooxymethyl)pyrimidine + H(+) = thiamine phosphate + diphosphate. It functions in the pathway cofactor biosynthesis; thiamine diphosphate biosynthesis; thiamine phosphate from 4-amino-2-methyl-5-diphosphomethylpyrimidine and 4-methyl-5-(2-phosphoethyl)-thiazole: step 1/1. In terms of biological role, condenses 4-methyl-5-(beta-hydroxyethyl)thiazole monophosphate (THZ-P) and 2-methyl-4-amino-5-hydroxymethyl pyrimidine pyrophosphate (HMP-PP) to form thiamine monophosphate (TMP). This chain is Thiamine-phosphate synthase, found in Saccharophagus degradans (strain 2-40 / ATCC 43961 / DSM 17024).